The sequence spans 867 residues: Schizokinen transporter SchT (867 aa).

The segment at 40–62 is disordered; it reads HPGKTQEAPSPTQLNTQSPAPNA. Polar residues predominate over residues 46–62; that stretch reads EAPSPTQLNTQSPAPNA. The short motif at 185-192 is the TonB box element; that stretch reads IELVVTAT. One can recognise a TBDR plug domain in the interval 197-307; the sequence is PIQNVPRSIT…TGGVINIITR (111 aa). The region spanning 313 to 867 is the TBDR beta-barrel domain; the sequence is KLTSRTEVGV…TLSIKYSFDW (555 aa). Positions 850 to 867 match the TonB C-terminal box motif; sequence AYAAARGRTLSIKYSFDW.

The protein belongs to the TonB-dependent receptor family.

It localises to the cell outer membrane. Its function is as follows. Involved in the TonB-dependent uptake of iron in complex with schizokinen, a dihydroxamate-type siderophore. The chain is Schizokinen transporter SchT from Nostoc sp. (strain PCC 7120 / SAG 25.82 / UTEX 2576).